A 125-amino-acid polypeptide reads, in one-letter code: Large ribosomal subunit protein bL12 (125 aa).

The protein belongs to the bacterial ribosomal protein bL12 family. As to quaternary structure, homodimer. Part of the ribosomal stalk of the 50S ribosomal subunit. Forms a multimeric L10(L12)X complex, where L10 forms an elongated spine to which 2 to 4 L12 dimers bind in a sequential fashion. Binds GTP-bound translation factors.

In terms of biological role, forms part of the ribosomal stalk which helps the ribosome interact with GTP-bound translation factors. Is thus essential for accurate translation. This Parabacteroides distasonis (strain ATCC 8503 / DSM 20701 / CIP 104284 / JCM 5825 / NCTC 11152) protein is Large ribosomal subunit protein bL12.